Here is a 187-residue protein sequence, read N- to C-terminus: MRCISPTALVTFCAGFCISNPVLAQGLEAGVGPRADCEVCKEFLDRFYNSLLSRGIDFSADTIEKELLNFCSDAKGKENRLCYYLGATTDAATKILGEVTRPMSVHIPAVKICEKLKKMDSQICELKYGKKLDLASVDLWKMRVAELKQILQRWGEECRACAEKSDYVNLIRELAPKYVEIYPQTEL.

A signal peptide spans 1–24 (MRCISPTALVTFCAGFCISNPVLA). 3 disulfide bridges follow: cysteine 37–cysteine 124, cysteine 40–cysteine 113, and cysteine 71–cysteine 82.

Belongs to the ARMET family. In terms of tissue distribution, expressed at high levels in the heart, skeletal muscle, testis and brain (at protein level). In the brain, detected in the cerebral cortex neurons through layers II to VI. In the hippocampus, detected in the CA1 to CA3 pyramidal regions and in the granule and polymorph layers of dentate gyrus. Weak expression in the striatum. In substantia nigra, detected in solitary cells that did not express tyrosine hydroxylase, a marker for dopaminergic neurons. Relatively high expression in the Purkinje cells of the cerebellum and in regions of the brain stem, including the locus coeruleus.

The protein localises to the secreted. Trophic factor for dopamine neurons. Prevents the 6-hydroxydopamine (6-OHDA)-induced degeneration of dopaminergic neurons. When administered after 6-OHDA-lesioning, restores the dopaminergic function and prevents the degeneration of dopaminergic neurons in substantia nigra. The sequence is that of Cerebral dopamine neurotrophic factor (Cdnf) from Mus musculus (Mouse).